A 424-amino-acid chain; its full sequence is S-phase kinase-associated protein 2 (424 aa).

Residues 1–220 (MHRKHLQEIP…LSLEGLRLSD (220 aa)) are mediates interaction with hepatitis C virus non-structural protein NS5A. The interval 39-73 (SALEKEEPDSENIPQELLSNLGHPESPPRKRLKSK) is disordered. Ser64 is modified (phosphoserine). The short motif at 67–73 (RKRLKSK) is the Nuclear localization signal element. An N6-acetyllysine; by p300/EP300 mark is found at Lys68 and Lys71. Phosphoserine is present on residues Ser72 and Ser75. Positions 94-140 (GVSWDSLPDELLLGIFSCLCLPELLKVSGVCKRWYRLASDESLWQTL) constitute an F-box domain. 10 LRR repeats span residues 151–176 (VTGRLLSQGVIAFRCPRSFMDQPLAE), 177–204 (HFSPFRVQHMDLSNSVIEVSTLHGILSQ), 210–234 (NLSLEGLRLSDPIVNTLAKNSNLVR), 235–257 (LNLSGCSGFSEFALQTLLSSCSR), 258–284 (LDELNLSWCFDFTEKHVQVAVAHVSET), 286–308 (TQLNLSGYRKNLQKSDLSTLVRR), 309–330 (CPNLVHLDLSDSVMLKNDCFQE), 334–356 (LNYLQHLSLSRCYDIIPETLLEL), 359–378 (IPTLKTLQVFGIVPDGTLQL), and 380–401 (KEALPHLQINCSHFTTIARPTI). Phosphoserine is present on Ser179. Positions 402-424 (GNKKNQEIWGIKCRLTLQKPSCL) are mediates interaction with IFI27.

Part of a SCF(SKP2) complex consisting of CUL1, RBX1, SKP1 and SKP2. Component of a SCF(SKP2)-like complex containing CUL1, SKP1, TRIM21 and SKP2. Interacts directly with CUL1 and SKP1. Interacts with CKS1. Interacts with ASB2 which is the substrate-recognition component of a probable ECS E3 ubiquitin-protein ligase complex; ASB2 is likely to bridge the formation of dimeric E3-ubiquitin-protein ligase complexes composed of an ECS complex and an SCF(SKP2) complex. Interacts with the cyclin-A-CDK2 complex. Interacts with ORC1, phosphorylated CDT1, phosphorylated RBL2, ELF4, phosphorylated RAG2, FOXO1, UBP43, MYC, TOB1, TAL1 and KMT2A/MLL1. Interacts with TRIM21. Interacts with cyclin-E. Interacts with IFI27; promotes the ubiquitin-mediated proteasomal degradation of hepatitis C virus/HCV non-structural protein NS5A. Interacts with CARM1. In terms of assembly, (Microbial infection) Interacts with hepatitis C virus/HCV non-structural protein NS5A; promotes the ubiquitin-mediated proteasomal degradation of NS5A. Post-translationally, phosphorylated on serine and threonine resudues in response to DNA damage, promoting 'Lys-63'-linked ubiquitination of NBN. Ubiquitinated by the APC/C complex, leading to its degradation by the proteasome. Deubiquitinated by USP13. In terms of processing, acetylation at Lys-68 and Lys-71 increases stability through impairment of APC/C-mediated proteolysis and promotes cytoplasmic retention. Deacetylated by SIRT3.

It is found in the cytoplasm. The protein resides in the nucleus. Its pathway is protein modification; protein ubiquitination. Its function is as follows. Substrate recognition component of a SCF (SKP1-CUL1-F-box protein) E3 ubiquitin-protein ligase complex which mediates the ubiquitination and subsequent proteasomal degradation of target proteins involved in cell cycle progression, signal transduction and transcription. Specifically recognizes phosphorylated CDKN1B/p27kip and is involved in regulation of G1/S transition. Degradation of CDKN1B/p27kip also requires CKS1. Recognizes target proteins ORC1, CDT1, RBL2, KMT2A/MLL1, CDK9, RAG2, NBN, FOXO1, UBP43, YTHDF2, and probably MYC, TOB1 and TAL1. Degradation of TAL1 also requires STUB1. Recognizes CDKN1A in association with CCNE1 or CCNE2 and CDK2. Promotes ubiquitination and destruction of CDH1 in a CK1-dependent manner, thereby regulating cell migration. Following phosphorylation in response to DNA damage, mediates 'Lys-63'-linked ubiquitination of NBN, promoting ATM recruitment to DNA damage sites and DNA repair via homologous recombination. Functionally, through the ubiquitin-mediated proteasomal degradation of hepatitis C virus non-structural protein 5A, has an antiviral activity towards that virus. In Homo sapiens (Human), this protein is S-phase kinase-associated protein 2 (SKP2).